A 501-amino-acid chain; its full sequence is Glucans biosynthesis protein G (501 aa).

An N-terminal signal peptide occupies residues 1–24; the sequence is MNRRQVLAALAAIPLLPEAFPANA.

The protein belongs to the OpgD/OpgG family.

The protein localises to the periplasm. It functions in the pathway glycan metabolism; osmoregulated periplasmic glucan (OPG) biosynthesis. Involved in the biosynthesis of osmoregulated periplasmic glucans (OPGs). The sequence is that of Glucans biosynthesis protein G from Rhodopseudomonas palustris (strain BisA53).